Reading from the N-terminus, the 183-residue chain is dCTP deaminase, dUMP-forming (183 aa).

Residues 99–104 (KSSIAR), Asp-117, 125–127 (TLE), Gln-146, Tyr-159, Lys-166, and Gln-170 contribute to the dCTP site. Residue Glu-127 is the Proton donor/acceptor of the active site.

Belongs to the dCTP deaminase family. Homotrimer.

It catalyses the reaction dCTP + 2 H2O = dUMP + NH4(+) + diphosphate. Its pathway is pyrimidine metabolism; dUMP biosynthesis; dUMP from dCTP: step 1/1. In terms of biological role, bifunctional enzyme that catalyzes both the deamination of dCTP to dUTP and the hydrolysis of dUTP to dUMP without releasing the toxic dUTP intermediate. The protein is dCTP deaminase, dUMP-forming of Methanoregula boonei (strain DSM 21154 / JCM 14090 / 6A8).